We begin with the raw amino-acid sequence, 468 residues long: Adenosylhomocysteinase (468 aa).

3 residues coordinate substrate: T57, D132, and E194. Position 195–197 (195–197 (TTT)) interacts with NAD(+). Substrate contacts are provided by K224 and D228. NAD(+) is bound by residues N229, 258 to 263 (GFGDVG), E281, N316, 337 to 339 (IGH), and N382.

Belongs to the adenosylhomocysteinase family. Requires NAD(+) as cofactor.

The protein resides in the cytoplasm. The catalysed reaction is S-adenosyl-L-homocysteine + H2O = L-homocysteine + adenosine. It functions in the pathway amino-acid biosynthesis; L-homocysteine biosynthesis; L-homocysteine from S-adenosyl-L-homocysteine: step 1/1. Its function is as follows. May play a key role in the regulation of the intracellular concentration of adenosylhomocysteine. The polypeptide is Adenosylhomocysteinase (Methylobacterium sp. (strain 4-46)).